We begin with the raw amino-acid sequence, 1029 residues long: Kinesin-like protein KIF17 (1029 aa).

In terms of domain architecture, Kinesin motor spans 5–335; sequence AVKVVVRCRP…LRYANRAKNI (331 aa). 91–98 provides a ligand contact to ATP; that stretch reads GQTGSGKS. The stretch at 346–462 forms a coiled coil; it reads KDALLREYQE…EENLRKETEA (117 aa). Disordered regions lie at residues 523 to 569 and 647 to 673; these read ELPK…MPTE and VPAP…PPRP. Over residues 532–551 the composition is skewed to low complexity; it reads SEISLGSSESSSLEETSVSE. Residues 657–673 show a composition bias toward basic and acidic residues; that stretch reads SDARPEAEAADDFPPRP. Positions 739–846 form a coiled coil; sequence QQVLARLQLL…QLEKIDYLAT (108 aa). 2 disordered regions span residues 908–931 and 968–1029; these read AVST…EPNM and KSLT…SEPL.

It belongs to the TRAFAC class myosin-kinesin ATPase superfamily. Kinesin family. Homodimer. Interacts with APBA1 (via PDZ domain); the interaction is direct and is required for association of KIF17 with the cargo that is to be transported. Interacts with IFT B complex components IFT52 and IFT57. Interacts with IFT70B. Interacts with PIWIL1. Interacts with TBATA.

The protein localises to the cytoplasm. It localises to the cytoskeleton. The protein resides in the cell projection. Its subcellular location is the cilium. It is found in the dendrite. In terms of biological role, dendrite-specific motor protein which, in association with the Apba1-containing complex (LIN-10-LIN-2-LIN-7 complex), transports vesicles containing N-methyl-D-aspartate (NMDA) receptor subunit NR2B along microtubules. The sequence is that of Kinesin-like protein KIF17 (KIF17) from Homo sapiens (Human).